Here is a 121-residue protein sequence, read N- to C-terminus: Large ribosomal subunit protein uL18 (121 aa).

Belongs to the universal ribosomal protein uL18 family. As to quaternary structure, part of the 50S ribosomal subunit; part of the 5S rRNA/L5/L18/L25 subcomplex. Contacts the 5S and 23S rRNAs.

Its function is as follows. This is one of the proteins that bind and probably mediate the attachment of the 5S RNA into the large ribosomal subunit, where it forms part of the central protuberance. This Anaplasma phagocytophilum (strain HZ) protein is Large ribosomal subunit protein uL18.